The following is a 727-amino-acid chain: Long-chain-fatty-acid--[acyl-carrier-protein] ligase AEE15, chloroplastic (727 aa).

The transit peptide at 1 to 66 (MQIRLKPDYS…PSFRRFRVHC (66 aa)) directs the protein to the chloroplast.

The protein belongs to the ATP-dependent AMP-binding enzyme family.

The protein resides in the plastid. Its subcellular location is the chloroplast. It catalyses the reaction a long-chain fatty acid + holo-[ACP] + ATP = a long-chain fatty acyl-[ACP] + AMP + diphosphate. Probably involved in the activation of fatty acids to acyl-carrier-protein prior to fatty acid elongation in plastids. Acts on medium- to long-chain fatty acids. The protein is Long-chain-fatty-acid--[acyl-carrier-protein] ligase AEE15, chloroplastic (AAE15) of Arabidopsis thaliana (Mouse-ear cress).